The following is a 67-amino-acid chain: Protein AaeX (67 aa).

2 helical membrane passes run 9–29 (IFGL…ALFF) and 47–67 (PALF…CLFV).

Belongs to the AaeX family.

The protein resides in the cell membrane. The sequence is that of Protein AaeX from Serratia marcescens.